A 248-amino-acid chain; its full sequence is MRLAIHGYGATGHYVHELAPDAVVAVIDKTKTAEQVPSYGTLAEMTESVDAIIDFSHPSLLPDLLAYGIKTKTPLVIATTGFSEAELQTIRDASTQIPIFQSYNMSFGIAMMQQLLKTLVPLAGAFDIELLEKHHNQKVDAPSGTAELLLRTIQDLRDVQPVYERESTREKREPNEIGMHSMRGGTIFGEHEVLFAGVDELIEIKHTALSKKVFASGAIKAAEALIQKSAGLYTLETLYTQEDSHVIN.

Asp-28 contributes to the NAD(+) binding site. Lys-29 is a binding site for NADP(+). Residues 78 to 80 (ATT) and 102 to 105 (SYNM) contribute to the NAD(+) site. His-134 functions as the Proton donor/acceptor in the catalytic mechanism. Residue His-135 coordinates (S)-2,3,4,5-tetrahydrodipicolinate. The active-site Proton donor is the Lys-138. (S)-2,3,4,5-tetrahydrodipicolinate is bound at residue 144-145 (GT).

The protein belongs to the DapB family.

It localises to the cytoplasm. It catalyses the reaction (S)-2,3,4,5-tetrahydrodipicolinate + NAD(+) + H2O = (2S,4S)-4-hydroxy-2,3,4,5-tetrahydrodipicolinate + NADH + H(+). It carries out the reaction (S)-2,3,4,5-tetrahydrodipicolinate + NADP(+) + H2O = (2S,4S)-4-hydroxy-2,3,4,5-tetrahydrodipicolinate + NADPH + H(+). It participates in amino-acid biosynthesis; L-lysine biosynthesis via DAP pathway; (S)-tetrahydrodipicolinate from L-aspartate: step 4/4. Functionally, catalyzes the conversion of 4-hydroxy-tetrahydrodipicolinate (HTPA) to tetrahydrodipicolinate. In Exiguobacterium sibiricum (strain DSM 17290 / CCUG 55495 / CIP 109462 / JCM 13490 / 255-15), this protein is 4-hydroxy-tetrahydrodipicolinate reductase.